The sequence spans 237 residues: Probable aquaporin SIP2-1 (237 aa).

Transmembrane regions (helical) follow at residues 15-35 (FMWI…LGFS), 39-59 (PSGE…FAYL), 71-91 (LTAL…SVFV), 122-142 (VAIH…VLLS), 169-189 (ILGS…GWAY), and 202-222 (VYWL…KVVF). The NPA 1 motif lies at 69–71 (NPL). The short motif at 180–182 (NPA) is the NPA 2 element.

This sequence belongs to the MIP/aquaporin (TC 1.A.8) family. SIP (TC 1.A.8.10) subfamily. Expressed in dividing cells and elongating regions of the root tips, emerging lateral roots, root steles, cotyledons, main veins of the rosette leaves, vascular tissues of the flower petals, stigma, stamens (anthers and filaments), pollen and the top and bottom (receptacle) of siliques.

The protein localises to the endoplasmic reticulum membrane. In terms of biological role, water channel required to facilitate the transport of water across cell membrane. Inactive in yeast cells. This Arabidopsis thaliana (Mouse-ear cress) protein is Probable aquaporin SIP2-1 (SIP2-1).